The chain runs to 208 residues: Small ribosomal subunit protein uS4 (208 aa).

An S4 RNA-binding domain is found at 98-158; the sequence is GRLDNVVYRM…EKSKKQARIK (61 aa).

Belongs to the universal ribosomal protein uS4 family. In terms of assembly, part of the 30S ribosomal subunit. Contacts protein S5. The interaction surface between S4 and S5 is involved in control of translational fidelity.

One of the primary rRNA binding proteins, it binds directly to 16S rRNA where it nucleates assembly of the body of the 30S subunit. In terms of biological role, with S5 and S12 plays an important role in translational accuracy. The chain is Small ribosomal subunit protein uS4 from Actinobacillus pleuropneumoniae serotype 5b (strain L20).